A 702-amino-acid chain; its full sequence is Methionine--tRNA ligase (702 aa).

The short motif at 23-33 (PYANGPLHLGH) is the 'HIGH' region element. The Zn(2+) site is built by Cys-154, Cys-157, Cys-167, and Cys-170. The 'KMSKS' region signature appears at 341 to 345 (KMSKS). Residue Lys-344 coordinates ATP. The interval 562–593 (LAPPPASAKQQNASMSNTAPPPTAEEPETTAP) is disordered. The segment covering 569–578 (AKQQNASMSN) has biased composition (polar residues). Positions 599-702 (DFAKLDLRIG…SSAQPGMPVR (104 aa)) constitute a tRNA-binding domain.

Belongs to the class-I aminoacyl-tRNA synthetase family. MetG type 1 subfamily. In terms of assembly, homodimer. The cofactor is Zn(2+).

The protein localises to the cytoplasm. It carries out the reaction tRNA(Met) + L-methionine + ATP = L-methionyl-tRNA(Met) + AMP + diphosphate. Its function is as follows. Is required not only for elongation of protein synthesis but also for the initiation of all mRNA translation through initiator tRNA(fMet) aminoacylation. This Xylella fastidiosa (strain M12) protein is Methionine--tRNA ligase.